A 185-amino-acid chain; its full sequence is TATA-box-binding protein 3 (185 aa).

2 repeat units span residues isoleucine 7–leucine 84 and valine 100–phenylalanine 178.

It belongs to the TBP family.

General factor that plays a role in the activation of archaeal genes transcribed by RNA polymerase. Binds specifically to the TATA box promoter element which lies close to the position of transcription initiation. In Methanosarcina acetivorans (strain ATCC 35395 / DSM 2834 / JCM 12185 / C2A), this protein is TATA-box-binding protein 3.